We begin with the raw amino-acid sequence, 275 residues long: Transcription factor JUNGBRUNNEN 1 (275 aa).

Residues 1-24 (MSGEGNLGKDHEEENEAPLPGFRF) are disordered. The region spanning 18 to 167 (PLPGFRFHPT…VWTLCRIFKR (150 aa)) is the NAC domain. A DNA-binding region spans residues 115-173 (VGLKKSLVYYLGSAGKGTKTDWMMHEFRLPSTTKTDSPAQQAEVWTLCRIFKRVTSQRN). Residues 191 to 219 (CSKTSSLDSDHTSHRTVDSMSHEPPLPQP) form a disordered region. Over residues 198 to 211 (DSDHTSHRTVDSMS) the composition is skewed to basic and acidic residues.

As to expression, expressed in roots, root caps, cotyledons, tips and margin of young leaves, senescent regions of fully expanded leaves and floral tissues, including old sepals, petals, staments, mature anthers and pollen grains. Not detected in the abscission zone of open flowers, emerging lateral roots and root meristematic zones.

It is found in the nucleus. In terms of biological role, transcription factor that binds to the 5'- RRYGCCGT-3' consensus core sequence. Central longevity regulator. Negative regulator of leaf senescence. Modulates cellular H(2)O(2) levels and enhances tolerance to various abiotic stresses through the regulation of DREB2A. In Arabidopsis thaliana (Mouse-ear cress), this protein is Transcription factor JUNGBRUNNEN 1 (JUB1).